Here is a 1299-residue protein sequence, read N- to C-terminus: Nuclear factor related to kappa-B-binding protein (1299 aa).

The DEUBAD domain maps to 39–156 (PEDLLEDPEI…LKQILASRSD (118 aa)). Disordered regions lie at residues 163–187 (RSGP…REWR) and 204–232 (GDTA…PAVP). Residues 216–232 (SSWLPSSPARSPSPAVP) are compositionally biased toward low complexity. A phosphoserine mark is found at serine 228 and serine 298. A Glycyl lysine isopeptide (Lys-Gly) (interchain with G-Cter in SUMO2) cross-link involves residue lysine 327. Residue serine 351 is modified to Phosphoserine. The interval 370 to 495 (LGINEISSSF…FCKQENEDSS (126 aa)) is winged-helix like domain. Residue lysine 469 forms a Glycyl lysine isopeptide (Lys-Gly) (interchain with G-Cter in SUMO2) linkage. A Glycyl lysine isopeptide (Lys-Gly) (interchain with G-Cter in SUMO1); alternate cross-link involves residue lysine 488. Lysine 488 is covalently cross-linked (Glycyl lysine isopeptide (Lys-Gly) (interchain with G-Cter in SUMO2); alternate). Disordered regions lie at residues 669 to 760 (AAKA…SSSG), 882 to 902 (LPAT…TSAP), and 1017 to 1043 (VHAA…TVVK). Composition is skewed to low complexity over residues 677-688 (QQKPKPPSKVKS), 695-715 (IKVL…DSSM), and 723-733 (VTPTTPALPAI). Positions 744-760 (NKSGPSTVSEPAKSSSG) are enriched in polar residues. 2 stretches are compositionally biased toward low complexity: residues 892–902 (PATSSPGTSAP) and 1019–1043 (AADS…TVVK). Serine 1022 bears the Phosphoserine mark. Lysine 1237 carries the post-translational modification N6-acetyllysine. Serine 1291 carries the phosphoserine modification.

Belongs to the NFRKB family. In terms of assembly, component of the chromatin remodeling INO80 complex; specifically part of a complex module associated with the N-terminus of INO80. Interacts with UCHL5; NFRKB competes with ADRM1 for interaction with UCHL5. Expressed in thymus, brain, testes, spleen and liver.

Its subcellular location is the nucleus. In terms of biological role, binds to the DNA consensus sequence 5'-GGGGAATCTCC-3'. Putative regulatory component of the chromatin remodeling INO80 complex which is involved in transcriptional regulation, DNA replication and probably DNA repair. Modulates the deubiquitinase activity of UCHL5 in the INO80 complex. The chain is Nuclear factor related to kappa-B-binding protein (NFRKB) from Homo sapiens (Human).